Consider the following 360-residue polypeptide: MKSSILEKLERLKERYEEVSALLSEADVINNQARFRDLSKEYAELEPVVVAYKGYLQLLADIEEAKHLIAEGDADMREMAEEELEGCEARLEPTELELQKLLLPKDPNDEKNCYLEVRAGTGGDEAAIFSGDLFRMYSRYAETQGWRVEILSQSEGEHGGFKEIISLVSGSGVYSKLKFESGAHRVQRVPETESQGRIHTSACTVAVMPEADELEEVNINKADLRIDTYRASGAGGQHVNKTDSAIRITHIPTGIVVECQDERSQHKNRARAMSLLATKLKTMQEEAAHKSISEERRNLVGSGDRSERIRTYNYPQGRVTDHRINLTLYSLDAVMQGDLEPVIGPLANEYQADQLAAIAD.

The residue at position 237 (Gln237) is an N5-methylglutamine.

Belongs to the prokaryotic/mitochondrial release factor family. Methylated by PrmC. Methylation increases the termination efficiency of RF1.

It is found in the cytoplasm. In terms of biological role, peptide chain release factor 1 directs the termination of translation in response to the peptide chain termination codons UAG and UAA. The polypeptide is Peptide chain release factor 1 (Cellvibrio japonicus (strain Ueda107) (Pseudomonas fluorescens subsp. cellulosa)).